A 180-amino-acid polypeptide reads, in one-letter code: ADP-ribosylation factor 5 (180 aa).

Residue Gly2 is the site of N-myristoyl glycine attachment. GTP contacts are provided by residues 24–31, 67–71, and 126–129; these read GLDAAGKT, DVGGQ, and NKQD.

This sequence belongs to the small GTPase superfamily. Arf family.

The protein localises to the golgi apparatus. GTP-binding protein involved in protein trafficking; may modulate vesicle budding and uncoating within the Golgi apparatus. In Gallus gallus (Chicken), this protein is ADP-ribosylation factor 5 (ARF5).